The sequence spans 287 residues: Phosphoribosylaminoimidazole-succinocarboxamide synthase (287 aa).

It belongs to the SAICAR synthetase family.

It catalyses the reaction 5-amino-1-(5-phospho-D-ribosyl)imidazole-4-carboxylate + L-aspartate + ATP = (2S)-2-[5-amino-1-(5-phospho-beta-D-ribosyl)imidazole-4-carboxamido]succinate + ADP + phosphate + 2 H(+). It participates in purine metabolism; IMP biosynthesis via de novo pathway; 5-amino-1-(5-phospho-D-ribosyl)imidazole-4-carboxamide from 5-amino-1-(5-phospho-D-ribosyl)imidazole-4-carboxylate: step 1/2. The polypeptide is Phosphoribosylaminoimidazole-succinocarboxamide synthase (Neisseria meningitidis serogroup A / serotype 4A (strain DSM 15465 / Z2491)).